A 118-amino-acid polypeptide reads, in one-letter code: UPF0344 protein YisL (118 aa).

4 consecutive transmembrane segments (helical) span residues 4 to 24, 33 to 53, 62 to 82, and 93 to 113; these read LHIT…SLYS, ITHM…AELF, EYAG…MLLI, and LWVG…HLPI.

The protein belongs to the UPF0344 family.

It is found in the cell membrane. This Bacillus subtilis (strain 168) protein is UPF0344 protein YisL (yisL).